The primary structure comprises 494 residues: Lysine--tRNA ligase (494 aa).

2 residues coordinate Mg(2+): glutamate 407 and glutamate 414.

This sequence belongs to the class-II aminoacyl-tRNA synthetase family. As to quaternary structure, homodimer. It depends on Mg(2+) as a cofactor.

The protein localises to the cytoplasm. The enzyme catalyses tRNA(Lys) + L-lysine + ATP = L-lysyl-tRNA(Lys) + AMP + diphosphate. This chain is Lysine--tRNA ligase, found in Lactococcus lactis subsp. lactis (strain IL1403) (Streptococcus lactis).